The sequence spans 200 residues: Small ribosomal subunit protein eS1 (200 aa).

It belongs to the eukaryotic ribosomal protein eS1 family.

This is Small ribosomal subunit protein eS1 from Thermococcus onnurineus (strain NA1).